A 540-amino-acid polypeptide reads, in one-letter code: Cytosolic carboxypeptidase 6 (540 aa).

The region spanning 167 to 438 (YPYTYTRFQH…NVARTFLDYY (272 aa)) is the Peptidase M14 domain. Positions 230, 233, and 328 each coordinate Zn(2+). The active-site Proton donor/acceptor is the Glu-401.

Belongs to the peptidase M14 family. In terms of assembly, interacts with MYLK. It depends on Zn(2+) as a cofactor. As to expression, widely expressed. Expressed abundantly in testis, pituitary and brain and to a lower extent in eye, stomach, adrenal and kidney. In brain, expressed at low level in cerebellum as compared to cortex.

The protein localises to the cytoplasm. It is found in the cytosol. The protein resides in the cytoskeleton. It localises to the microtubule organizing center. Its subcellular location is the centrosome. The protein localises to the centriole. It is found in the golgi apparatus. The protein resides in the cilium basal body. The catalysed reaction is (L-glutamyl)(n+1)-gamma-L-glutamyl-L-glutamyl-[protein] + H2O = (L-glutamyl)(n)-gamma-L-glutamyl-L-glutamyl-[protein] + L-glutamate. The enzyme catalyses C-terminal L-alpha-aminoacyl-L-glutamyl-L-glutamyl-[tubulin] + H2O = C-terminal L-alpha-aminoacyl-L-glutamyl-[tubulin] + L-glutamate. Metallocarboxypeptidase that mediates protein deglutamylation of tubulin and non-tubulin target proteins. Catalyzes the removal of polyglutamate side chains present on the gamma-carboxyl group of glutamate residues within the C-terminal tail of tubulin protein. Specifically cleaves tubulin long-side-chains, while it is not able to remove the branching point glutamate. Also catalyzes the removal of polyglutamate residues from the carboxy-terminus of non-tubulin proteins such as MYLK. Mediates the deglutamylation of nucleotidyltransferase CGAS, leading to CGAS antiviral defense response activation. Involved in KLF4 deglutamylation which promotes KLF4 proteasome-mediated degradation, thereby negatively regulating cell pluripotency maintenance and embryogenesis. In Mus musculus (Mouse), this protein is Cytosolic carboxypeptidase 6.